The primary structure comprises 393 residues: Pectate lyase A (393 aa).

Residues M1–A32 form the signal peptide. 4 residues coordinate Ca(2+): E174, D176, D216, and D220. R273 is an active-site residue. A disulfide bridge links C330 with C358.

The protein belongs to the polysaccharide lyase 1 family. PLADES subfamily. Requires Ca(2+) as cofactor.

It localises to the secreted. The enzyme catalyses Eliminative cleavage of (1-&gt;4)-alpha-D-galacturonan to give oligosaccharides with 4-deoxy-alpha-D-galact-4-enuronosyl groups at their non-reducing ends.. It functions in the pathway glycan metabolism; pectin degradation; 2-dehydro-3-deoxy-D-gluconate from pectin: step 2/5. In terms of biological role, involved in maceration and soft-rotting of plant tissue. This is Pectate lyase A (pelA) from Dickeya chrysanthemi (Pectobacterium chrysanthemi).